We begin with the raw amino-acid sequence, 169 residues long: Peptide deformylase (169 aa).

Positions 91 and 133 each coordinate Fe cation. Glu134 is an active-site residue. Residue His137 participates in Fe cation binding.

It belongs to the polypeptide deformylase family. The cofactor is Fe(2+).

The catalysed reaction is N-terminal N-formyl-L-methionyl-[peptide] + H2O = N-terminal L-methionyl-[peptide] + formate. Functionally, removes the formyl group from the N-terminal Met of newly synthesized proteins. Requires at least a dipeptide for an efficient rate of reaction. N-terminal L-methionine is a prerequisite for activity but the enzyme has broad specificity at other positions. The protein is Peptide deformylase of Shigella boydii serotype 18 (strain CDC 3083-94 / BS512).